Here is a 187-residue protein sequence, read N- to C-terminus: Threonylcarbamoyl-AMP synthase (187 aa).

The YrdC-like domain occupies 4 to 187 (TLDLDRAVAT…DARSGQILRD (184 aa)).

This sequence belongs to the SUA5 family. TsaC subfamily.

The protein resides in the cytoplasm. The enzyme catalyses L-threonine + hydrogencarbonate + ATP = L-threonylcarbamoyladenylate + diphosphate + H2O. Functionally, required for the formation of a threonylcarbamoyl group on adenosine at position 37 (t(6)A37) in tRNAs that read codons beginning with adenine. Catalyzes the conversion of L-threonine, HCO(3)(-)/CO(2) and ATP to give threonylcarbamoyl-AMP (TC-AMP) as the acyladenylate intermediate, with the release of diphosphate. This is Threonylcarbamoyl-AMP synthase from Xanthomonas euvesicatoria pv. vesicatoria (strain 85-10) (Xanthomonas campestris pv. vesicatoria).